Reading from the N-terminus, the 284-residue chain is Bifunctional protein FolD (284 aa).

NADP(+) is bound by residues glycine 166–serine 168, serine 191, and isoleucine 232.

The protein belongs to the tetrahydrofolate dehydrogenase/cyclohydrolase family. Homodimer.

The catalysed reaction is (6R)-5,10-methylene-5,6,7,8-tetrahydrofolate + NADP(+) = (6R)-5,10-methenyltetrahydrofolate + NADPH. It catalyses the reaction (6R)-5,10-methenyltetrahydrofolate + H2O = (6R)-10-formyltetrahydrofolate + H(+). The protein operates within one-carbon metabolism; tetrahydrofolate interconversion. Catalyzes the oxidation of 5,10-methylenetetrahydrofolate to 5,10-methenyltetrahydrofolate and then the hydrolysis of 5,10-methenyltetrahydrofolate to 10-formyltetrahydrofolate. This is Bifunctional protein FolD from Thiobacillus denitrificans (strain ATCC 25259 / T1).